The chain runs to 114 residues: MSASDKTKLCNKGMSRTSRTTTFVITPAFRERDDEGANSLCKAFLNTFSNLKSGMFKCLLGVGAVGTFISTFPQFFLLPCLLCVRCVCVCLCASISYAASAIFSFSIFFFFCLA.

The next 2 helical transmembrane spans lie at 58–78 (CLLGVGAVGTFISTFPQFFLL) and 94–114 (SISYAASAIFSFSIFFFFCLA).

The protein localises to the membrane. This is an uncharacterized protein from Saccharomyces cerevisiae (strain ATCC 204508 / S288c) (Baker's yeast).